Consider the following 358-residue polypeptide: Protein-glutamate methylesterase/protein-glutamine glutaminase 1 (358 aa).

Residues 8-125 (RVLIVDDSAV…ARGLEGYAEE (118 aa)) form the Response regulatory domain. D59 carries the 4-aspartylphosphate modification. The CheB-type methylesterase domain occupies 165-352 (FRTTDRLIAI…LDRVAERLLA (188 aa)). Residues S177, H203, and D299 contribute to the active site.

This sequence belongs to the CheB family. Phosphorylated by CheA. Phosphorylation of the N-terminal regulatory domain activates the methylesterase activity.

It is found in the cytoplasm. It catalyses the reaction [protein]-L-glutamate 5-O-methyl ester + H2O = L-glutamyl-[protein] + methanol + H(+). The catalysed reaction is L-glutaminyl-[protein] + H2O = L-glutamyl-[protein] + NH4(+). Its function is as follows. Involved in chemotaxis. Part of a chemotaxis signal transduction system that modulates chemotaxis in response to various stimuli. Catalyzes the demethylation of specific methylglutamate residues introduced into the chemoreceptors (methyl-accepting chemotaxis proteins or MCP) by CheR. Also mediates the irreversible deamidation of specific glutamine residues to glutamic acid. The protein is Protein-glutamate methylesterase/protein-glutamine glutaminase 1 of Xanthomonas axonopodis pv. citri (strain 306).